We begin with the raw amino-acid sequence, 184 residues long: RNA polymerase sigma factor HrpL (184 aa).

The short motif at 49-62 (DILQCVFLEALRNE) is the Polymerase core binding element. A DNA-binding region (H-T-H motif) is located at residues 151–170 (YQETANTLGVPIGTVRSRLS).

Belongs to the sigma-70 factor family. ECF subfamily.

Functionally, sigma factors are initiation factors that promote the attachment of RNA polymerase to specific initiation sites and are then released. This sigma factor is involved in the activation of hprD as well as other hrp loci which are involved in plant pathogenicity, hrmA and avr genes. This chain is RNA polymerase sigma factor HrpL (hrpL), found in Pseudomonas syringae pv. syringae.